A 216-amino-acid polypeptide reads, in one-letter code: Uracil phosphoribosyltransferase (216 aa).

30–34 (KNLVK) is a GTP binding site. 5-phospho-alpha-D-ribose 1-diphosphate-binding positions include arginine 80, arginine 105, and 140 to 148 (DPMIATGST). Residues isoleucine 203 and 208–210 (GDA) each bind uracil. A 5-phospho-alpha-D-ribose 1-diphosphate-binding site is contributed by aspartate 209.

Belongs to the UPRTase family. The cofactor is Mg(2+).

It catalyses the reaction UMP + diphosphate = 5-phospho-alpha-D-ribose 1-diphosphate + uracil. The protein operates within pyrimidine metabolism; UMP biosynthesis via salvage pathway; UMP from uracil: step 1/1. Its activity is regulated as follows. Allosterically activated by GTP. Catalyzes the conversion of uracil and 5-phospho-alpha-D-ribose 1-diphosphate (PRPP) to UMP and diphosphate. The sequence is that of Uracil phosphoribosyltransferase from Sulfolobus acidocaldarius (strain ATCC 33909 / DSM 639 / JCM 8929 / NBRC 15157 / NCIMB 11770).